A 365-amino-acid polypeptide reads, in one-letter code: Alanine racemase (365 aa).

The Proton acceptor; specific for D-alanine role is filled by lysine 32. Lysine 32 carries the N6-(pyridoxal phosphate)lysine modification. Residue arginine 128 participates in substrate binding. Residue tyrosine 257 is the Proton acceptor; specific for L-alanine of the active site. Methionine 305 is a substrate binding site.

Belongs to the alanine racemase family. The cofactor is pyridoxal 5'-phosphate.

The enzyme catalyses L-alanine = D-alanine. Its pathway is amino-acid biosynthesis; D-alanine biosynthesis; D-alanine from L-alanine: step 1/1. Catalyzes the interconversion of L-alanine and D-alanine. May also act on other amino acids. In Francisella tularensis subsp. tularensis (strain WY96-3418), this protein is Alanine racemase (alr).